The chain runs to 149 residues: D-aminoacyl-tRNA deacylase (149 aa).

The Gly-cisPro motif, important for rejection of L-amino acids signature appears at 137-138 (GP).

Belongs to the DTD family. Homodimer.

The protein localises to the cytoplasm. The catalysed reaction is glycyl-tRNA(Ala) + H2O = tRNA(Ala) + glycine + H(+). The enzyme catalyses a D-aminoacyl-tRNA + H2O = a tRNA + a D-alpha-amino acid + H(+). In terms of biological role, an aminoacyl-tRNA editing enzyme that deacylates mischarged D-aminoacyl-tRNAs. Also deacylates mischarged glycyl-tRNA(Ala), protecting cells against glycine mischarging by AlaRS. Acts via tRNA-based rather than protein-based catalysis; rejects L-amino acids rather than detecting D-amino acids in the active site. By recycling D-aminoacyl-tRNA to D-amino acids and free tRNA molecules, this enzyme counteracts the toxicity associated with the formation of D-aminoacyl-tRNA entities in vivo and helps enforce protein L-homochirality. The protein is D-aminoacyl-tRNA deacylase of Clostridium novyi (strain NT).